Consider the following 194-residue polypeptide: Imidazoleglycerol-phosphate dehydratase (194 aa).

It belongs to the imidazoleglycerol-phosphate dehydratase family.

It localises to the cytoplasm. It catalyses the reaction D-erythro-1-(imidazol-4-yl)glycerol 3-phosphate = 3-(imidazol-4-yl)-2-oxopropyl phosphate + H2O. It functions in the pathway amino-acid biosynthesis; L-histidine biosynthesis; L-histidine from 5-phospho-alpha-D-ribose 1-diphosphate: step 6/9. The protein is Imidazoleglycerol-phosphate dehydratase of Listeria monocytogenes serovar 1/2a (strain ATCC BAA-679 / EGD-e).